A 456-amino-acid polypeptide reads, in one-letter code: Argininosuccinate lyase (456 aa).

Belongs to the lyase 1 family. Argininosuccinate lyase subfamily.

Its subcellular location is the cytoplasm. It catalyses the reaction 2-(N(omega)-L-arginino)succinate = fumarate + L-arginine. The protein operates within amino-acid biosynthesis; L-arginine biosynthesis; L-arginine from L-ornithine and carbamoyl phosphate: step 3/3. This is Argininosuccinate lyase from Listeria monocytogenes serotype 4b (strain F2365).